Reading from the N-terminus, the 470-residue chain is ATP synthase subunit beta (470 aa).

157–164 (GGAGVGKT) contacts ATP.

The protein belongs to the ATPase alpha/beta chains family. F-type ATPases have 2 components, CF(1) - the catalytic core - and CF(0) - the membrane proton channel. CF(1) has five subunits: alpha(3), beta(3), gamma(1), delta(1), epsilon(1). CF(0) has three main subunits: a(1), b(2) and c(9-12). The alpha and beta chains form an alternating ring which encloses part of the gamma chain. CF(1) is attached to CF(0) by a central stalk formed by the gamma and epsilon chains, while a peripheral stalk is formed by the delta and b chains.

It is found in the cell inner membrane. The catalysed reaction is ATP + H2O + 4 H(+)(in) = ADP + phosphate + 5 H(+)(out). Its function is as follows. Produces ATP from ADP in the presence of a proton gradient across the membrane. The catalytic sites are hosted primarily by the beta subunits. This chain is ATP synthase subunit beta, found in Geobacter metallireducens (strain ATCC 53774 / DSM 7210 / GS-15).